Consider the following 198-residue polypeptide: Na(+)-translocating NADH-quinone reductase subunit E (198 aa).

Transmembrane regions (helical) follow at residues 11 to 31 (AVFV…FLAV), 35 to 55 (VSTA…AVPI), 77 to 97 (FLNF…LEMI), 110 to 130 (GIFL…SFMV), 140 to 160 (IVYG…MAGI), and 176 to 196 (LGIT…FSGV).

The protein belongs to the NqrDE/RnfAE family. In terms of assembly, composed of six subunits; NqrA, NqrB, NqrC, NqrD, NqrE and NqrF.

The protein resides in the cell inner membrane. It carries out the reaction a ubiquinone + n Na(+)(in) + NADH + H(+) = a ubiquinol + n Na(+)(out) + NAD(+). Its function is as follows. NQR complex catalyzes the reduction of ubiquinone-1 to ubiquinol by two successive reactions, coupled with the transport of Na(+) ions from the cytoplasm to the periplasm. NqrA to NqrE are probably involved in the second step, the conversion of ubisemiquinone to ubiquinol. This Klebsiella pneumoniae subsp. pneumoniae (strain ATCC 700721 / MGH 78578) protein is Na(+)-translocating NADH-quinone reductase subunit E.